The primary structure comprises 292 residues: Homoserine kinase (292 aa).

81 to 91 (RPKSGLGSSGA) lines the ATP pocket.

It belongs to the GHMP kinase family. Homoserine kinase subfamily.

It localises to the cytoplasm. The enzyme catalyses L-homoserine + ATP = O-phospho-L-homoserine + ADP + H(+). It participates in amino-acid biosynthesis; L-threonine biosynthesis; L-threonine from L-aspartate: step 4/5. Functionally, catalyzes the ATP-dependent phosphorylation of L-homoserine to L-homoserine phosphate. The protein is Homoserine kinase of Pyrococcus furiosus (strain ATCC 43587 / DSM 3638 / JCM 8422 / Vc1).